The sequence spans 441 residues: Maltokinase (441 aa).

It belongs to the aminoglycoside phosphotransferase family. As to quaternary structure, monomer.

The catalysed reaction is D-maltose + ATP = alpha-maltose 1-phosphate + ADP + H(+). It participates in glycan biosynthesis; glycogen biosynthesis. In terms of biological role, catalyzes the ATP-dependent phosphorylation of maltose to maltose 1-phosphate. Is involved in a branched alpha-glucan biosynthetic pathway from trehalose, together with TreS, GlgE and GlgB. In Mycolicibacterium vanbaalenii (strain DSM 7251 / JCM 13017 / BCRC 16820 / KCTC 9966 / NRRL B-24157 / PYR-1) (Mycobacterium vanbaalenii), this protein is Maltokinase (mak).